A 339-amino-acid chain; its full sequence is tRNA N6-adenosine threonylcarbamoyltransferase (339 aa).

2 residues coordinate Fe cation: H111 and H115. Substrate is bound by residues 139–143, D172, G185, D189, and N280; that span reads LVSGG. D308 provides a ligand contact to Fe cation.

Belongs to the KAE1 / TsaD family. Fe(2+) serves as cofactor.

It is found in the cytoplasm. The catalysed reaction is L-threonylcarbamoyladenylate + adenosine(37) in tRNA = N(6)-L-threonylcarbamoyladenosine(37) in tRNA + AMP + H(+). Functionally, required for the formation of a threonylcarbamoyl group on adenosine at position 37 (t(6)A37) in tRNAs that read codons beginning with adenine. Is involved in the transfer of the threonylcarbamoyl moiety of threonylcarbamoyl-AMP (TC-AMP) to the N6 group of A37, together with TsaE and TsaB. TsaD likely plays a direct catalytic role in this reaction. The polypeptide is tRNA N6-adenosine threonylcarbamoyltransferase (Bacteroides thetaiotaomicron (strain ATCC 29148 / DSM 2079 / JCM 5827 / CCUG 10774 / NCTC 10582 / VPI-5482 / E50)).